The sequence spans 403 residues: Arginine deiminase (403 aa).

The Amidino-cysteine intermediate role is filled by Cys388.

Belongs to the arginine deiminase family.

The protein resides in the cytoplasm. The catalysed reaction is L-arginine + H2O = L-citrulline + NH4(+). It functions in the pathway amino-acid degradation; L-arginine degradation via ADI pathway; carbamoyl phosphate from L-arginine: step 1/2. This chain is Arginine deiminase, found in Mycoplasma capricolum subsp. capricolum (strain California kid / ATCC 27343 / NCTC 10154).